The following is a 626-amino-acid chain: UvrABC system protein C (626 aa).

Residues proline 26–valine 105 form the GIY-YIG domain. The region spanning serine 215–leucine 250 is the UVR domain.

Belongs to the UvrC family. In terms of assembly, interacts with UvrB in an incision complex.

The protein resides in the cytoplasm. In terms of biological role, the UvrABC repair system catalyzes the recognition and processing of DNA lesions. UvrC both incises the 5' and 3' sides of the lesion. The N-terminal half is responsible for the 3' incision and the C-terminal half is responsible for the 5' incision. This Acaryochloris marina (strain MBIC 11017) protein is UvrABC system protein C.